A 219-amino-acid polypeptide reads, in one-letter code: Maleylacetoacetate isomerase (219 aa).

One can recognise a GST N-terminal domain in the interval N4–P87. Glutathione contacts are provided by residues S14 to R19, Q45, Q71 to S72, Q111, and N115 to K117. The region spanning G92 to P217 is the GST C-terminal domain.

The protein belongs to the GST superfamily. Zeta family. Requires glutathione as cofactor.

It carries out the reaction 4-maleylacetoacetate = 4-fumarylacetoacetate. Its pathway is amino-acid degradation; L-phenylalanine degradation; acetoacetate and fumarate from L-phenylalanine: step 5/6. The sequence is that of Maleylacetoacetate isomerase (mai) from Dictyostelium discoideum (Social amoeba).